The following is a 424-amino-acid chain: MLDLKYIRENPQEIKEALTKRNNETSIIDEIISFDEERRKLLQQIETLRAQRNQNSKLVAKLKAQKKNDEAEEIIIQGKEISEQIKNLESDLKNIEDNLNYKLLCVPNIPDSGVPVGKDENENLEVRRWGKPREFDFEPKAHWDLGTELNLLDFDRAAKLSGSRFTILKGDIARLELALINFMIDLHTKDHGYTFILPPHLVTKETITSSGQLPKFEDDLYKTSLDQMYLISTAEVSLAGLHRNETLEFNSLPLKYVAYTPCYRREAGSYGKDVRGMIRQHQFDKVELFWYTTPEESSQALEELTSHAEKVLQLLNLPYRVVALCTGDLGFAAAKTYDLEVWLPSYNDYKEISSCSNTKDFQGRRGNIRYRDRENKLNFVHTLNGSGLAVGRTLVAIMENYQTANGKIEIPEKLIPYMGKEFIG.

233–235 (TAE) is a binding site for L-serine. 264–266 (RRE) provides a ligand contact to ATP. Glu287 is an L-serine binding site. 351–354 (EISS) is a binding site for ATP. Position 386 (Ser386) interacts with L-serine.

Belongs to the class-II aminoacyl-tRNA synthetase family. Type-1 seryl-tRNA synthetase subfamily. As to quaternary structure, homodimer. The tRNA molecule binds across the dimer.

The protein localises to the cytoplasm. The enzyme catalyses tRNA(Ser) + L-serine + ATP = L-seryl-tRNA(Ser) + AMP + diphosphate + H(+). It catalyses the reaction tRNA(Sec) + L-serine + ATP = L-seryl-tRNA(Sec) + AMP + diphosphate + H(+). The protein operates within aminoacyl-tRNA biosynthesis; selenocysteinyl-tRNA(Sec) biosynthesis; L-seryl-tRNA(Sec) from L-serine and tRNA(Sec): step 1/1. In terms of biological role, catalyzes the attachment of serine to tRNA(Ser). Is also able to aminoacylate tRNA(Sec) with serine, to form the misacylated tRNA L-seryl-tRNA(Sec), which will be further converted into selenocysteinyl-tRNA(Sec). This chain is Serine--tRNA ligase, found in Petrotoga mobilis (strain DSM 10674 / SJ95).